Consider the following 193-residue polypeptide: ATP-dependent protease subunit HslV (193 aa).

Threonine 12 is a catalytic residue. Alanine 167, cysteine 170, and threonine 173 together coordinate Na(+).

This sequence belongs to the peptidase T1B family. HslV subfamily. In terms of assembly, a double ring-shaped homohexamer of HslV is capped on each side by a ring-shaped HslU homohexamer. The assembly of the HslU/HslV complex is dependent on binding of ATP.

The protein localises to the cytoplasm. It carries out the reaction ATP-dependent cleavage of peptide bonds with broad specificity.. Its activity is regulated as follows. Allosterically activated by HslU binding. Functionally, protease subunit of a proteasome-like degradation complex believed to be a general protein degrading machinery. The polypeptide is ATP-dependent protease subunit HslV (Bartonella quintana (strain Toulouse) (Rochalimaea quintana)).